Consider the following 186-residue polypeptide: Elongation factor P (186 aa).

The protein belongs to the elongation factor P family.

It localises to the cytoplasm. Its pathway is protein biosynthesis; polypeptide chain elongation. In terms of biological role, involved in peptide bond synthesis. Stimulates efficient translation and peptide-bond synthesis on native or reconstituted 70S ribosomes in vitro. Probably functions indirectly by altering the affinity of the ribosome for aminoacyl-tRNA, thus increasing their reactivity as acceptors for peptidyl transferase. This chain is Elongation factor P, found in Streptococcus mutans serotype c (strain ATCC 700610 / UA159).